Here is a 224-residue protein sequence, read N- to C-terminus: Peptide deformylase 3 (224 aa).

Residues Cys-135 and His-177 each contribute to the Fe cation site. Residue Glu-178 is part of the active site. Fe cation is bound at residue His-181.

The protein belongs to the polypeptide deformylase family. Fe(2+) serves as cofactor.

It catalyses the reaction N-terminal N-formyl-L-methionyl-[peptide] + H2O = N-terminal L-methionyl-[peptide] + formate. Functionally, removes the formyl group from the N-terminal Met of newly synthesized proteins. Requires at least a dipeptide for an efficient rate of reaction. N-terminal L-methionine is a prerequisite for activity but the enzyme has broad specificity at other positions. The protein is Peptide deformylase 3 of Streptomyces avermitilis (strain ATCC 31267 / DSM 46492 / JCM 5070 / NBRC 14893 / NCIMB 12804 / NRRL 8165 / MA-4680).